The following is a 308-amino-acid chain: Rhamnose-binding lectin (308 aa).

Positions 1–23 (MMLILKLSLLSLLIATPGLLVSG) are cleaved as a signal peptide. SUEL-type lectin domains lie at 27–115 (ITCY…SFDC), 123–213 (ICEH…YICT), and 218–308 (VCEG…YACV). Residue Asn110 is glycosylated (N-linked (GlcNAc...) asparagine).

In terms of assembly, homotrimer. In terms of tissue distribution, expressed in eggs, but not in liver.

Its subcellular location is the secreted. Functionally, lectin that binds L-rhamnose. Also binds monosaccharides possessing steric similarity to the hydroxyl group orientation at C2 and C4 of the pyranose ring structure of L-rhamnose, such as L-mannose and L-lyxose. In Silurus asotus (Amur catfish), this protein is Rhamnose-binding lectin.